The following is a 262-amino-acid chain: Cytochrome c oxidase subunit 3 (262 aa).

7 helical membrane-spanning segments follow: residues 16–36, 42–59, 83–103, 128–148, 163–183, 198–218, and 240–260; these read PWPL…VQWF, TLFL…YQWW, GMIL…WAFF, FQIP…VTWA, SLFF…YEYI, FFVA…FLLI, and AWYW…IYWW.

Belongs to the cytochrome c oxidase subunit 3 family. Component of the cytochrome c oxidase (complex IV, CIV), a multisubunit enzyme composed of a catalytic core of 3 subunits and several supernumerary subunits. The complex exists as a monomer or a dimer and forms supercomplexes (SCs) in the inner mitochondrial membrane with ubiquinol-cytochrome c oxidoreductase (cytochrome b-c1 complex, complex III, CIII).

Its subcellular location is the mitochondrion inner membrane. It catalyses the reaction 4 Fe(II)-[cytochrome c] + O2 + 8 H(+)(in) = 4 Fe(III)-[cytochrome c] + 2 H2O + 4 H(+)(out). Its function is as follows. Component of the cytochrome c oxidase, the last enzyme in the mitochondrial electron transport chain which drives oxidative phosphorylation. The respiratory chain contains 3 multisubunit complexes succinate dehydrogenase (complex II, CII), ubiquinol-cytochrome c oxidoreductase (cytochrome b-c1 complex, complex III, CIII) and cytochrome c oxidase (complex IV, CIV), that cooperate to transfer electrons derived from NADH and succinate to molecular oxygen, creating an electrochemical gradient over the inner membrane that drives transmembrane transport and the ATP synthase. Cytochrome c oxidase is the component of the respiratory chain that catalyzes the reduction of oxygen to water. Electrons originating from reduced cytochrome c in the intermembrane space (IMS) are transferred via the dinuclear copper A center (CU(A)) of subunit 2 and heme A of subunit 1 to the active site in subunit 1, a binuclear center (BNC) formed by heme A3 and copper B (CU(B)). The BNC reduces molecular oxygen to 2 water molecules using 4 electrons from cytochrome c in the IMS and 4 protons from the mitochondrial matrix. The polypeptide is Cytochrome c oxidase subunit 3 (Aedes aegypti (Yellowfever mosquito)).